A 124-amino-acid polypeptide reads, in one-letter code: Large ribosomal subunit protein mL52 (124 aa).

The N-terminal 23 residues, 1-23 (MAALGMLLSTGVRRLHCGSAARA), are a transit peptide targeting the mitochondrion. The interval 99–124 (LQEEKRKQQNALKPKGVLLQNPGPSQ) is disordered.

This sequence belongs to the mitochondrion-specific ribosomal protein mL52 family. In terms of assembly, component of the mitochondrial ribosome large subunit (39S) which comprises a 16S rRNA and about 50 distinct proteins.

The protein resides in the mitochondrion. This chain is Large ribosomal subunit protein mL52 (MRPL52), found in Bos taurus (Bovine).